The sequence spans 423 residues: Serine--tRNA ligase (423 aa).

Residue 231–233 coordinates L-serine; it reads TGE. 262-264 contributes to the ATP binding site; it reads RSE. Glu-285 contacts L-serine. 349 to 352 provides a ligand contact to ATP; sequence EISS. An L-serine-binding site is contributed by Ser-385.

The protein belongs to the class-II aminoacyl-tRNA synthetase family. Type-1 seryl-tRNA synthetase subfamily. Homodimer. The tRNA molecule binds across the dimer.

It localises to the cytoplasm. The enzyme catalyses tRNA(Ser) + L-serine + ATP = L-seryl-tRNA(Ser) + AMP + diphosphate + H(+). It catalyses the reaction tRNA(Sec) + L-serine + ATP = L-seryl-tRNA(Sec) + AMP + diphosphate + H(+). It functions in the pathway aminoacyl-tRNA biosynthesis; selenocysteinyl-tRNA(Sec) biosynthesis; L-seryl-tRNA(Sec) from L-serine and tRNA(Sec): step 1/1. Its function is as follows. Catalyzes the attachment of serine to tRNA(Ser). Is also able to aminoacylate tRNA(Sec) with serine, to form the misacylated tRNA L-seryl-tRNA(Sec), which will be further converted into selenocysteinyl-tRNA(Sec). The polypeptide is Serine--tRNA ligase (Coxiella burnetii (strain CbuK_Q154) (Coxiella burnetii (strain Q154))).